Consider the following 185-residue polypeptide: Ribosome-recycling factor (185 aa).

Belongs to the RRF family.

The protein resides in the cytoplasm. Functionally, responsible for the release of ribosomes from messenger RNA at the termination of protein biosynthesis. May increase the efficiency of translation by recycling ribosomes from one round of translation to another. This is Ribosome-recycling factor from Shewanella piezotolerans (strain WP3 / JCM 13877).